The primary structure comprises 333 residues: Taste receptor type 2 member 38 (333 aa).

Topologically, residues 1–17 are extracellular; sequence MLTLTRIHTVSYEVRST. Residues 18–38 form a helical membrane-spanning segment; that stretch reads FLFISVLEFAVGFLTNAFVFL. At 39-55 the chain is on the cytoplasmic side; that stretch reads VNFWDVVKRQPLSNSDC. Residues 56 to 76 form a helical membrane-spanning segment; sequence VLLCLSISRLFLHGLLFLSAI. Residues 77–94 lie on the Extracellular side of the membrane; sequence QLTHFQKLSEPLNHSYQA. A helical membrane pass occupies residues 95 to 115; sequence IIMLWMIANQANLWLAACLSL. The Cytoplasmic portion of the chain corresponds to 116 to 142; it reads LYCSKLIRFSHTFLICLASWVSRKISQ. Residues 143 to 163 traverse the membrane as a helical segment; the sequence is MLLGIILCSCICTVLCVWCFF. Residues 164–190 lie on the Extracellular side of the membrane; the sequence is SRPHFTVTTVLFMNNNTRLNWQIKDLN. Residue Asn-178 is glycosylated (N-linked (GlcNAc...) asparagine). A helical transmembrane segment spans residues 191 to 211; the sequence is LFYSFLFCYLWSVPPFLLFLV. At 212–251 the chain is on the cytoplasmic side; sequence SSGMLTVSLGRHMRTMKVYTRDSRDPSLEAHIKALKSLVS. The chain crosses the membrane as a helical span at residues 252–272; the sequence is FFCFFVISSCAAFISVPLLIL. Over 273-276 the chain is Extracellular; it reads WRDK. A helical membrane pass occupies residues 277-297; sequence IGVMVCVGIMAACPSGHAAVL. The Cytoplasmic portion of the chain corresponds to 298-333; that stretch reads ISGNAKLRRAVTTILLWAQSSLKVRADHKADSRTLC.

This sequence belongs to the G-protein coupled receptor T2R family.

Its subcellular location is the membrane. In terms of biological role, receptor that may play a role in the perception of bitterness and is gustducin-linked. May play a role in sensing the chemical composition of the gastrointestinal content. The activity of this receptor may stimulate alpha gustducin, mediate PLC-beta-2 activation and lead to the gating of TRPM5. The polypeptide is Taste receptor type 2 member 38 (TAS2R38) (Pan troglodytes (Chimpanzee)).